The sequence spans 982 residues: Ubiquitin carboxyl-terminal hydrolase 15 (982 aa).

In terms of domain architecture, DUSP spans 7–118 (VDLETQRSEV…SQQPIARKVV (112 aa)). Residues 288–933 (CGLSNLGNTC…AAYVLFYQRQ (646 aa)) enclose the USP domain. The active-site Nucleophile is C297. A disordered region spans residues 623 to 695 (TEENDGSLHC…DNDSENGLCT (73 aa)). Residues 655–672 (METDEPDDESSQDQELPS) are compositionally biased toward acidic residues. Catalysis depends on H891, which acts as the Proton acceptor. The segment at 950–982 (QGASAATGAPHESDEESNEDENDIENENCMHTN) is disordered. Acidic residues predominate over residues 962-975 (SDEESNEDENDIEN).

The protein belongs to the peptidase C19 family.

It is found in the cytoplasm. The protein localises to the nucleus. The catalysed reaction is Thiol-dependent hydrolysis of ester, thioester, amide, peptide and isopeptide bonds formed by the C-terminal Gly of ubiquitin (a 76-residue protein attached to proteins as an intracellular targeting signal).. Hydrolase that removes conjugated ubiquitin from target proteins and regulates various pathways such as the TGF-beta receptor signaling and NF-kappa-B pathways. Acts as a key regulator of TGF-beta receptor signaling pathway, but the precise mechanism is still unclear: according to a report, acts by promoting deubiquitination of monoubiquitinated R-SMADs, thereby alleviating inhibition of R-SMADs and promoting activation of TGF-beta target genes. According to another reports, regulates the TGF-beta receptor signaling pathway by mediating deubiquitination and stabilization of tgfbr1, leading to an enhanced TGF-beta signal. May also regulate gene expression and/or DNA repair through the deubiquitination of histone H2B. Involved in endosome organization by mediating deubiquitination of rnf26 target(s), releasing vesicles that are restrained in the perinuclear region. In Xenopus tropicalis (Western clawed frog), this protein is Ubiquitin carboxyl-terminal hydrolase 15 (usp15).